Here is a 192-residue protein sequence, read N- to C-terminus: Ion-translocating oxidoreductase complex subunit A (192 aa).

The next 6 membrane-spanning stretches (helical) occupy residues 5 to 25 (LLLL…FLGL), 39 to 59 (IGMS…SYLV), 65 to 85 (LPFD…AVVV), 102 to 122 (ALGI…VALL), 134 to 154 (AIYG…FSAM), and 171 to 191 (AIAM…TGLV).

The protein belongs to the NqrDE/RnfAE family. As to quaternary structure, the complex is composed of six subunits: RnfA, RnfB, RnfC, RnfD, RnfE and RnfG.

It localises to the cell inner membrane. Part of a membrane-bound complex that couples electron transfer with translocation of ions across the membrane. The polypeptide is Ion-translocating oxidoreductase complex subunit A (Shewanella oneidensis (strain ATCC 700550 / JCM 31522 / CIP 106686 / LMG 19005 / NCIMB 14063 / MR-1)).